The following is a 1360-amino-acid chain: NAD(+) hydrolase sarm1 (1360 aa).

The tract at residues 27–52 is disordered; it reads RITGGPGSISTTSASAITAPSTMSQT. Residues 34–48 show a composition bias toward low complexity; it reads SISTTSASAITAPST. 2 SAM domains span residues 690–754 and 760–828; these read WSVE…LKRM and KDTA…NSLP. Residues 837-981 form the TIR domain; the sequence is KTLDVFVSYR…KLERFLRGEK (145 aa). Residues 846-847 and Glu876 each bind NAD(+); that span reads RR. Glu919 is a catalytic residue. Polar residues predominate over residues 997–1010; sequence VSYQRMHSNDSDYQ. Disordered stretches follow at residues 997 to 1026, 1046 to 1085, 1121 to 1148, 1192 to 1217, and 1249 to 1343; these read VSYQRMHSNDSDYQSGGAGAGSGAGTGGGG, GQANHQANRYRQSPSPARQRGSTSQLSGYSRAPSKRSQIL, SAAGLGHGSGSGMGSGYRSHSVDGLLDQ, NDSVTRRDKHTLSPPGNVQQHRKSRS, and IPMT…GNNK. The span at 1012–1026 shows a compositional bias: gly residues; sequence GGAGAGSGAGTGGGG. A compositionally biased stretch (polar residues) spans 1046-1073; it reads GQANHQANRYRQSPSPARQRGSTSQLSG. Residues 1125–1135 show a composition bias toward gly residues; sequence LGHGSGSGMGS. Residues 1321–1335 are compositionally biased toward low complexity; the sequence is SLTSNKTSNSSLGSN.

It belongs to the SARM1 family. As to expression, widely expressed in larval brains and adult brains.

The protein resides in the cytoplasm. It localises to the cell projection. Its subcellular location is the axon. It catalyses the reaction NAD(+) + H2O = ADP-D-ribose + nicotinamide + H(+). The enzyme catalyses NAD(+) = cyclic ADP-beta-D-ribose + nicotinamide + H(+). In terms of biological role, NAD(+) hydrolase, which plays a key role in axonal degeneration following injury by regulating NAD(+) metabolism. Acts as a negative regulator of MYD88- and TRIF-dependent toll-like receptor signaling pathway by promoting Wallerian degeneration, an injury-induced form of programmed subcellular death which involves degeneration of an axon distal to the injury site. Wallerian degeneration is triggered by NAD(+) depletion: in response to injury, it is activated and catalyzes cleavage of NAD(+) into ADP-D-ribose (ADPR), cyclic ADPR (cADPR) and nicotinamide; NAD(+) cleavage promoting axon destruction. Involved in the down-regulation of the tracheal immune response to Gram-negative bacteria. This is likely by mediating Tollo signaling in the tracheal epithelium. The sequence is that of NAD(+) hydrolase sarm1 from Drosophila melanogaster (Fruit fly).